A 180-amino-acid chain; its full sequence is Acireductone dioxygenase (180 aa).

The Fe(2+) site is built by His-97, His-99, Glu-103, and His-141. Ni(2+) contacts are provided by His-97, His-99, Glu-103, and His-141.

This sequence belongs to the acireductone dioxygenase (ARD) family. In terms of assembly, monomer. The cofactor is Fe(2+). Ni(2+) is required as a cofactor.

The catalysed reaction is 1,2-dihydroxy-5-(methylsulfanyl)pent-1-en-3-one + O2 = 3-(methylsulfanyl)propanoate + CO + formate + 2 H(+). The enzyme catalyses 1,2-dihydroxy-5-(methylsulfanyl)pent-1-en-3-one + O2 = 4-methylsulfanyl-2-oxobutanoate + formate + 2 H(+). It participates in amino-acid biosynthesis; L-methionine biosynthesis via salvage pathway; L-methionine from S-methyl-5-thio-alpha-D-ribose 1-phosphate: step 5/6. Catalyzes 2 different reactions between oxygen and the acireductone 1,2-dihydroxy-3-keto-5-methylthiopentene (DHK-MTPene) depending upon the metal bound in the active site. Fe-containing acireductone dioxygenase (Fe-ARD) produces formate and 2-keto-4-methylthiobutyrate (KMTB), the alpha-ketoacid precursor of methionine in the methionine recycle pathway. Ni-containing acireductone dioxygenase (Ni-ARD) produces methylthiopropionate, carbon monoxide and formate, and does not lie on the methionine recycle pathway. This Acidiphilium cryptum (strain JF-5) protein is Acireductone dioxygenase.